Reading from the N-terminus, the 210-residue chain is Putative 3-methyladenine DNA glycosylase (210 aa).

The segment at Ser180–Pro210 is disordered. The span at Ala186 to Ala196 shows a compositional bias: low complexity. Basic residues predominate over residues Arg201–Pro210.

It belongs to the DNA glycosylase MPG family.

This is Putative 3-methyladenine DNA glycosylase from Anaeromyxobacter dehalogenans (strain 2CP-1 / ATCC BAA-258).